The primary structure comprises 132 residues: Ribosome-binding factor A (132 aa).

Belongs to the RbfA family. Monomer. Binds 30S ribosomal subunits, but not 50S ribosomal subunits or 70S ribosomes.

The protein localises to the cytoplasm. Its function is as follows. One of several proteins that assist in the late maturation steps of the functional core of the 30S ribosomal subunit. Associates with free 30S ribosomal subunits (but not with 30S subunits that are part of 70S ribosomes or polysomes). Required for efficient processing of 16S rRNA. May interact with the 5'-terminal helix region of 16S rRNA. The sequence is that of Ribosome-binding factor A from Pasteurella multocida (strain Pm70).